A 95-amino-acid polypeptide reads, in one-letter code: Aspartyl/glutamyl-tRNA(Asn/Gln) amidotransferase subunit C (95 aa).

This sequence belongs to the GatC family. As to quaternary structure, heterotrimer of A, B and C subunits.

The catalysed reaction is L-glutamyl-tRNA(Gln) + L-glutamine + ATP + H2O = L-glutaminyl-tRNA(Gln) + L-glutamate + ADP + phosphate + H(+). The enzyme catalyses L-aspartyl-tRNA(Asn) + L-glutamine + ATP + H2O = L-asparaginyl-tRNA(Asn) + L-glutamate + ADP + phosphate + 2 H(+). Its function is as follows. Allows the formation of correctly charged Asn-tRNA(Asn) or Gln-tRNA(Gln) through the transamidation of misacylated Asp-tRNA(Asn) or Glu-tRNA(Gln) in organisms which lack either or both of asparaginyl-tRNA or glutaminyl-tRNA synthetases. The reaction takes place in the presence of glutamine and ATP through an activated phospho-Asp-tRNA(Asn) or phospho-Glu-tRNA(Gln). This Rhodospirillum rubrum (strain ATCC 11170 / ATH 1.1.1 / DSM 467 / LMG 4362 / NCIMB 8255 / S1) protein is Aspartyl/glutamyl-tRNA(Asn/Gln) amidotransferase subunit C.